A 1009-amino-acid chain; its full sequence is MADRLIVRGAREHNLKNVSLDLPRDSLIVFTGLSGSGKSSLAFDTIFAEGQRRYVESLSSYARQFLGQMDKPDVDFIEGLSPAVSIDQKSTSRNPRSTVGTITEVYDYLRLLFARIGKPHCPECGRPISRQSPQAIVDKVLELPEGSRFQVLSPLVRERKGEFVDLFADLQTKGYSRARVDGQTIQLSDPPTLKKQEKHTIEVVIDRLTVKEGAKRRLTDSVETALGLAGGMVVLDFVDLPEDDPERERMYSEHLYCPYDDLSFEELEPRSFSFNSPFGACPDCSGIGTRMEVDAELIVPDEEKSLDEGAIHPWSHGHTKDYFGRLIGALADALGFRTDIPFAGLPQRAKKALLYGHKTQIEVRYRNRYGRERVYTTPFEGAVPFVKRRHSEAESDASRERFEGYMREVPCPTCQGTRLKPLVLAVTVMEKSIAEVAAMSISDCADFLGKLKLNARDKKIAERVLKEVNERLRFLVDVGLDYLSLNRAAGTLSGGEAQRIRLATQIGSGLVGVLYVLDEPSIGLHQRDNHRLIETLVRLRDMGNTLIVVEHDEDTIKVADWIVDIGPGAGEHGGKVVHSGSLKELLANAESQTGQYLSGKKSIPLPDIRRPRDPSRQLTVHGARENNLQDIDVSFPLGVLTAVTGVSGSGKSTLVNDILYTHLARELNGARSVPGRHTRVDGDDLVDKVVHVDQSPIGRTPRSNPATYTGVFDHVRKLFAETTEAKVRGYLPGRFSFNVKGGRCENCSGDGTIKIEMNFLPDVYVPCEVCHGARYNRETLEVHYKGKSIADVLNMPIEEAMHFFEAVPAIARHLNTLNDVGLGYVRLGQSATTLSGGEAQRVKLASELQRRSTGRTVYVLDEPTTGLHFEDISKLLVVLSGLVDKGNTVIVIEHNLDVIKTADWVVDMGPEGGAGGGLVVAEGTPEEVAGVPTSHTGKFLREILDADRISDAASVKAPRKTAARKTAAAKSTTKKTATVRTTNNTATKKAAAVTKKTAPAKKTTRARKA.

32–39 (GLSGSGKS) contributes to the ATP binding site. ABC transporter domains follow at residues 314–592 (WSHG…AESQ) and 612–941 (RDPS…KFLR). 645–652 (GVSGSGKS) provides a ligand contact to ATP. The C4-type zinc-finger motif lies at 744 to 770 (CENCSGDGTIKIEMNFLPDVYVPCEVC). Residues 956–1009 (KAPRKTAARKTAAAKSTTKKTATVRTTNNTATKKAAAVTKKTAPAKKTTRARKA) form a disordered region. A compositionally biased stretch (low complexity) spans 964–997 (RKTAAAKSTTKKTATVRTTNNTATKKAAAVTKKT). Basic residues predominate over residues 998–1009 (APAKKTTRARKA).

Belongs to the ABC transporter superfamily. UvrA family. In terms of assembly, forms a heterotetramer with UvrB during the search for lesions.

Its subcellular location is the cytoplasm. The UvrABC repair system catalyzes the recognition and processing of DNA lesions. UvrA is an ATPase and a DNA-binding protein. A damage recognition complex composed of 2 UvrA and 2 UvrB subunits scans DNA for abnormalities. When the presence of a lesion has been verified by UvrB, the UvrA molecules dissociate. The protein is UvrABC system protein A of Streptomyces avermitilis (strain ATCC 31267 / DSM 46492 / JCM 5070 / NBRC 14893 / NCIMB 12804 / NRRL 8165 / MA-4680).